The primary structure comprises 216 residues: Somatotropin (216 aa).

The signal sequence occupies residues 1–26 (MAAGPRTSALLAFALLCLPWTREVGA). His-45 is a binding site for Zn(2+). Cysteines 78 and 189 form a disulfide. Ser-131 carries the phosphoserine modification. Position 198 (Glu-198) interacts with Zn(2+). Cys-206 and Cys-214 are oxidised to a cystine.

Belongs to the somatotropin/prolactin family.

The protein resides in the secreted. In terms of biological role, plays an important role in growth control. Its major role in stimulating body growth is to stimulate the liver and other tissues to secrete IGF1. It stimulates both the differentiation and proliferation of myoblasts. It also stimulates amino acid uptake and protein synthesis in muscle and other tissues. In Sus scrofa (Pig), this protein is Somatotropin (GH1).